An 80-amino-acid chain; its full sequence is Small ribosomal subunit protein bS18 (80 aa).

Belongs to the bacterial ribosomal protein bS18 family. In terms of assembly, part of the 30S ribosomal subunit. Forms a tight heterodimer with protein bS6.

In terms of biological role, binds as a heterodimer with protein bS6 to the central domain of the 16S rRNA, where it helps stabilize the platform of the 30S subunit. This Staphylococcus haemolyticus (strain JCSC1435) protein is Small ribosomal subunit protein bS18.